The following is a 135-amino-acid chain: Transcription antitermination protein NusB (135 aa).

This sequence belongs to the NusB family.

In terms of biological role, involved in transcription antitermination. Required for transcription of ribosomal RNA (rRNA) genes. Binds specifically to the boxA antiterminator sequence of the ribosomal RNA (rrn) operons. The chain is Transcription antitermination protein NusB from Lacticaseibacillus casei (strain BL23) (Lactobacillus casei).